Consider the following 336-residue polypeptide: Phosphate acyltransferase (336 aa).

Belongs to the PlsX family. In terms of assembly, homodimer. Probably interacts with PlsY.

It localises to the cytoplasm. The enzyme catalyses a fatty acyl-[ACP] + phosphate = an acyl phosphate + holo-[ACP]. It functions in the pathway lipid metabolism; phospholipid metabolism. Catalyzes the reversible formation of acyl-phosphate (acyl-PO(4)) from acyl-[acyl-carrier-protein] (acyl-ACP). This enzyme utilizes acyl-ACP as fatty acyl donor, but not acyl-CoA. This Pseudomonas aeruginosa (strain UCBPP-PA14) protein is Phosphate acyltransferase.